We begin with the raw amino-acid sequence, 533 residues long: (E)-beta-farnesene synthase (533 aa).

Residues Asp286, Asp290, Asn430, Ser434, and Glu438 each coordinate Mg(2+). The DDXXD motif signature appears at 286–290; sequence DDMMD.

It belongs to the terpene synthase family. The cofactor is Mg(2+). Co(2+) is required as a cofactor. It depends on Mn(2+) as a cofactor.

It localises to the cytoplasm. The catalysed reaction is (2E,6E)-farnesyl diphosphate = (E)-beta-farnesene + diphosphate. It functions in the pathway secondary metabolite biosynthesis; terpenoid biosynthesis. Its function is as follows. Sesquiterpene cyclase catalyzing the production of sixfold more beta-farnesene than alpha-bergamotene from farnesyl diphosphate. Involved in indirect defense by producing volatile signals attracting natural enemies of herbivores. The protein is (E)-beta-farnesene synthase of Zea perennis (Perennial teosinte).